A 447-amino-acid polypeptide reads, in one-letter code: tRNA threonylcarbamoyladenosine dehydratase 2 (447 aa).

Helical transmembrane passes span 9 to 29, 86 to 106, and 294 to 314; these read LITATALFTVAVTTITDYAWT, NQYVVVVGAGGVGSWVVNSLV, and ILPVLGTMPSLFGLTITTWIL.

It belongs to the HesA/MoeB/ThiF family.

The protein resides in the mitochondrion outer membrane. Catalyzes the ATP-dependent dehydration of threonylcarbamoyladenosine at position 37 (t(6)A37) to form cyclic t(6)A37 (ct(6)A37) in tRNAs that read codons beginning with adenine. This Saccharomyces cerevisiae (strain ATCC 204508 / S288c) (Baker's yeast) protein is tRNA threonylcarbamoyladenosine dehydratase 2 (TCD2).